The sequence spans 113 residues: Dolichyl-diphosphooligosaccharide--protein glycosyltransferase subunit DAD1 (113 aa).

Position 2 is an N-acetylserine (Ser2). Topologically, residues 2–30 are cytoplasmic; that stretch reads SASVLSVISRFLEEYLSATPQRLKLLDAY. Residues 31 to 51 traverse the membrane as a helical segment; the sequence is LLYILLTGALQFGYCLLVGTF. Residue Pro52 is a topological domain, lumenal. The helical transmembrane segment at 53 to 73 threads the bilayer; that stretch reads FNSFLSGFISCVGSFILAVCL. Residues 74–92 lie on the Cytoplasmic side of the membrane; the sequence is RIQINPQNKADFQGISPER. Residues 93–113 form a helical membrane-spanning segment; that stretch reads AFADFLFASTILHLVVMNFVG.

This sequence belongs to the DAD/OST2 family. As to quaternary structure, component of the oligosaccharyltransferase (OST) complex. OST exists in two different complex forms which contain common core subunits RPN1, RPN2, OST48, OST4, DAD1 and TMEM258, either STT3A or STT3B as catalytic subunits, and form-specific accessory subunits. STT3A complex assembly occurs through the formation of 3 subcomplexes. Subcomplex 1 contains RPN1 and TMEM258, subcomplex 2 contains the STT3A-specific subunits STT3A, DC2/OSTC, and KCP2 as well as the core subunit OST4, and subcomplex 3 contains RPN2, DAD1, and OST48. The STT3A complex can form stable complexes with the Sec61 complex or with both the Sec61 and TRAP complexes.

Its subcellular location is the endoplasmic reticulum membrane. The protein operates within protein modification; protein glycosylation. Functionally, subunit of the oligosaccharyl transferase (OST) complex that catalyzes the initial transfer of a defined glycan (Glc(3)Man(9)GlcNAc(2) in eukaryotes) from the lipid carrier dolichol-pyrophosphate to an asparagine residue within an Asn-X-Ser/Thr consensus motif in nascent polypeptide chains, the first step in protein N-glycosylation. N-glycosylation occurs cotranslationally and the complex associates with the Sec61 complex at the channel-forming translocon complex that mediates protein translocation across the endoplasmic reticulum (ER). All subunits are required for a maximal enzyme activity. This is Dolichyl-diphosphooligosaccharide--protein glycosyltransferase subunit DAD1 from Bos taurus (Bovine).